We begin with the raw amino-acid sequence, 422 residues long: Tyrosine--tRNA ligase (422 aa).

Tyr35 provides a ligand contact to L-tyrosine. Residues 40-49 (PTAPSLHLGN) carry the 'HIGH' region motif. Residues Tyr170 and Gln174 each coordinate L-tyrosine. Positions 231-235 (KFGKT) match the 'KMSKS' region motif. Lys234 lines the ATP pocket. An S4 RNA-binding domain is found at 353–419 (APVVDLFAEV…GKKNLAAVEV (67 aa)).

This sequence belongs to the class-I aminoacyl-tRNA synthetase family. TyrS type 1 subfamily. In terms of assembly, homodimer.

The protein localises to the cytoplasm. It catalyses the reaction tRNA(Tyr) + L-tyrosine + ATP = L-tyrosyl-tRNA(Tyr) + AMP + diphosphate + H(+). Catalyzes the attachment of tyrosine to tRNA(Tyr) in a two-step reaction: tyrosine is first activated by ATP to form Tyr-AMP and then transferred to the acceptor end of tRNA(Tyr). The polypeptide is Tyrosine--tRNA ligase (Streptomyces avermitilis (strain ATCC 31267 / DSM 46492 / JCM 5070 / NBRC 14893 / NCIMB 12804 / NRRL 8165 / MA-4680)).